Reading from the N-terminus, the 36-residue chain is Photosystem I reaction center subunit VIII (36 aa).

The helical transmembrane segment at 6–26 threads the bilayer; the sequence is LPSIFVPLVGLVFPAIAMASL.

It belongs to the PsaI family.

The protein localises to the plastid. It localises to the chloroplast thylakoid membrane. May help in the organization of the PsaL subunit. The sequence is that of Photosystem I reaction center subunit VIII from Liriodendron tulipifera (Tuliptree).